The sequence spans 1522 residues: MDRLCGSGELGSKFWDSNLTVYTNTPDLTPCFQNSLLAWVPCIYLWAALPCYLFYLRHHRLGYIVLSCLSRLKTALGVLLWCISWVDLFYSFHGLVHGSSPAPVFFITPLLVGITMLLATLLIQYERLRGVRSSGVLIIFWLLCVICAIIPFRSKILLALAEGKILDPFRFTTFYIYFALVLCAFILSCFQEKPPLFSPENLDTNPCPEASAGFFSRLSFWWFTKLAILGYRRPLEDSDLWSLSEEDCSHKVVQRLLEAWQKQQTQASGPQTAALEPKIAGEDEVLLKARPKTKKPSFLRALVRTFTSSLLMGACFKLIQDLSPSSTHSCSASSSGLFRPHGPYWWGFLLAGLMFVSSTMQTLILHQHYHCIFVMALRIRTAIIGVIYRKALTITNSVKREYTVGEMVNLMSVDAQRFMDVSPFINLLWSAPLQVILAIYFLWQILGPSALAGVAVIVLLIPLNGAVSMKMKTYQVQQMKFKDSRIKLMSEILNGIKVLKLYAWEPTFLEQVEGIRQGELQLLRKGAYLQAISTFIWVCTPFMVTLITLGVYVCVDKNNVLDAEKAFVSLSLFNILKIPLNLLPQLISGMTQTSVSLKRIQDFLNQDELDPQCVERKTISPGRAITIHNGTFSWSKDLPPTLHSINIQIPKGALVAVVGPVGCGKSSLVSALLGEMEKLEGAVSVKGSVAYVPQQAWIQNCTLQENVLFGQPMNPKRYQQALETCALLADLDVLPGGDQTEIGEKGINLSGGQRQRVSLARAVYSDANIFLLDDPLSAVDSHVAKHIFDQVIGPEGVLAGKTRVLVTHGISFLPQTDFIIVLADGQITEMGHYSELLQHDGSFANFLRNYAPDENQEANEGVLQHANEEVLLLEDTLSTHTDLTDTEPAIYEVRKQFMREMSSLSSEGEGQNRPVLKRYTSSLEKEVPATQTKETGALIKEEIAETGNVKLSVYWDYAKSVGLCTTLFICLLYAGQNAVAIGANVWLSAWTNDVEEHGQQNNTSVRLGVYATLGILQGLLVMLSAFTMVVGAIQAARLLHTALLHNQIRAPQSFFDTTPSGRILNRFSKDIYVIHEVLAPTILMLFNSFYTSISTIVVIVASTPLFCVVVLPLAVFYGFVQRFYVATSRQLKRLESVSRSPIFSHFSETVTGTSVIRAYGRVQDFKVLSDAKVDSNQKTTYPYIASNRWLGVHVEFVGNCVVLFSALFAVIGRNSLNPGLVGLSVSYALQVTLSLNWMIRTLSDLESNIIAVERVKEYSKTETEAPWVLESNRAPEGWPRSGVVEFRNYSVRYRPGLELVLKNLTLHVQGGEKVGIVGRTGAGKSSMTLCLFRILEAAEGEIFIDGLNVAHIGLHDLRSQLTIIPQDPILFSGTLRMNLDPFGRYSDEDIWRTLELSHLSAFVSSQPTGLDFQCSEGGDNLSVGQRQLVCLARALLRKSRVLVLDEATAAIDLETDDLIQGTIRTQFEDCTVLTIAHRLNTIMDYNRVLVLDKGVVAEFDSPVNLIAAGGIFYGMAKDAGLA.

The Extracellular portion of the chain corresponds to 1–32 (MDRLCGSGELGSKFWDSNLTVYTNTPDLTPCF). Asparagine 18 carries an N-linked (GlcNAc...) asparagine glycan. Residues 33–53 (QNSLLAWVPCIYLWAALPCYL) traverse the membrane as a helical segment. Residues 54-73 (FYLRHHRLGYIVLSCLSRLK) are Cytoplasmic-facing. A helical transmembrane segment spans residues 74-94 (TALGVLLWCISWVDLFYSFHG). Over 95–99 (LVHGS) the chain is Extracellular. A helical transmembrane segment spans residues 100 to 120 (SPAPVFFITPLLVGITMLLAT). Residues 121–132 (LLIQYERLRGVR) lie on the Cytoplasmic side of the membrane. A helical membrane pass occupies residues 133–153 (SSGVLIIFWLLCVICAIIPFR). Residues 154–171 (SKILLALAEGKILDPFRF) lie on the Extracellular side of the membrane. A helical membrane pass occupies residues 172–192 (TTFYIYFALVLCAFILSCFQE). Residues 193 to 301 (KPPLFSPENL…KTKKPSFLRA (109 aa)) lie on the Cytoplasmic side of the membrane. Residues 302–322 (LVRTFTSSLLMGACFKLIQDL) traverse the membrane as a helical segment. The 283-residue stretch at 310-592 (LLMGACFKLI…LPQLISGMTQ (283 aa)) folds into the ABC transmembrane type-1 1 domain. Residues 323–347 (SPSSTHSCSASSSGLFRPHGPYWWG) are Extracellular-facing. A helical transmembrane segment spans residues 348-368 (FLLAGLMFVSSTMQTLILHQH). Topologically, residues 369 to 424 (YHCIFVMALRIRTAIIGVIYRKALTITNSVKREYTVGEMVNLMSVDAQRFMDVSPF) are cytoplasmic. Residues 425 to 445 (INLLWSAPLQVILAIYFLWQI) traverse the membrane as a helical segment. The Extracellular portion of the chain corresponds to 446–448 (LGP). Residues 449–469 (SALAGVAVIVLLIPLNGAVSM) traverse the membrane as a helical segment. Over 470 to 531 (KMKTYQVQQM…LLRKGAYLQA (62 aa)) the chain is Cytoplasmic. A helical transmembrane segment spans residues 532–552 (ISTFIWVCTPFMVTLITLGVY). At 553 to 574 (VCVDKNNVLDAEKAFVSLSLFN) the chain is on the extracellular side. The helical transmembrane segment at 575 to 595 (ILKIPLNLLPQLISGMTQTSV) threads the bilayer. The Cytoplasmic portion of the chain corresponds to 596-958 (SLKRIQDFLN…VKLSVYWDYA (363 aa)). Residues 625–849 (ITIHNGTFSW…DGSFANFLRN (225 aa)) enclose the ABC transporter 1 domain. 659 to 666 (GPVGCGKS) provides a ligand contact to ATP. 2 positions are modified to phosphoserine: serine 902 and serine 905. A helical transmembrane segment spans residues 959–979 (KSVGLCTTLFICLLYAGQNAV). One can recognise an ABC transmembrane type-1 2 domain in the interval 966-1247 (TLFICLLYAG…MIRTLSDLES (282 aa)). Residues 980–1016 (AIGANVWLSAWTNDVEEHGQQNNTSVRLGVYATLGIL) are Extracellular-facing. Residues asparagine 1001 and asparagine 1002 are each glycosylated (N-linked (GlcNAc...) asparagine). Residues 1017 to 1037 (QGLLVMLSAFTMVVGAIQAAR) traverse the membrane as a helical segment. Over 1038-1080 (LLHTALLHNQIRAPQSFFDTTPSGRILNRFSKDIYVIHEVLAP) the chain is Cytoplasmic. Residues 1081–1101 (TILMLFNSFYTSISTIVVIVA) form a helical membrane-spanning segment. Serine 1102 is a topological domain (extracellular). A helical membrane pass occupies residues 1103 to 1123 (TPLFCVVVLPLAVFYGFVQRF). The Cytoplasmic segment spans residues 1124–1194 (YVATSRQLKR…ASNRWLGVHV (71 aa)). Residues 1195–1215 (EFVGNCVVLFSALFAVIGRNS) traverse the membrane as a helical segment. Over 1216 to 1217 (LN) the chain is Extracellular. Residues 1218–1238 (PGLVGLSVSYALQVTLSLNWM) form a helical membrane-spanning segment. Topologically, residues 1239 to 1522 (IRTLSDLESN…YGMAKDAGLA (284 aa)) are cytoplasmic. Residues 1286–1518 (FRNYSVRYRP…GGIFYGMAKD (233 aa)) form the ABC transporter 2 domain. 1318 to 1325 (GRTGAGKS) is an ATP binding site.

Belongs to the ABC transporter superfamily. ABCC family. Conjugate transporter (TC 3.A.1.208) subfamily. As to expression, expressed in lung, ileum, colon and liver. Higher in liver of Eisai hyperbilirubinemic rats.

The protein localises to the basolateral cell membrane. It is found in the basal cell membrane. The catalysed reaction is an S-substituted glutathione(in) + ATP + H2O = an S-substituted glutathione(out) + ADP + phosphate + H(+). The enzyme catalyses ATP + H2O + xenobioticSide 1 = ADP + phosphate + xenobioticSide 2.. It carries out the reaction taurocholate(in) + ATP + H2O = taurocholate(out) + ADP + phosphate + H(+). It catalyses the reaction glycocholate(in) + ATP + H2O = glycocholate(out) + ADP + phosphate + H(+). The catalysed reaction is taurolithocholate 3-sulfate(in) + ATP + H2O = taurolithocholate 3-sulfate(out) + ADP + phosphate + H(+). The enzyme catalyses 17beta-estradiol 17-O-(beta-D-glucuronate)(in) + ATP + H2O = 17beta-estradiol 17-O-(beta-D-glucuronate)(out) + ADP + phosphate + H(+). It carries out the reaction dehydroepiandrosterone 3-sulfate(in) + ATP + H2O = dehydroepiandrosterone 3-sulfate(out) + ADP + phosphate + H(+). It catalyses the reaction leukotriene C4(in) + ATP + H2O = leukotriene C4(out) + ADP + phosphate + H(+). The catalysed reaction is (4Z,15Z)-bilirubin IXalpha C8-beta-D-glucuronoside(in) + ATP + H2O = (4Z,15Z)-bilirubin IXalpha C8-beta-D-glucuronoside(out) + ADP + phosphate + H(+). The enzyme catalyses (4Z,15Z)-bilirubin IXalpha C8,C12-beta-D-bisglucuronoside(in) + ATP + H2O = (4Z,15Z)-bilirubin IXalpha C8,C12-beta-D-bisglucuronoside(out) + ADP + phosphate + H(+). It carries out the reaction taurochenodeoxycholate 3-sulfate(in) + ATP + H2O = taurochenodeoxycholate 3-sulfate(out) + ADP + phosphate + H(+). Functionally, ATP-dependent transporter of the ATP-binding cassette (ABC) family that binds and hydrolyzes ATP to enable active transport of various substrates including many drugs, toxicants and endogenous compound across cell membranes. Transports glucuronide conjugates such as bilirubin diglucuronide, estradiol-17-beta-o-glucuronide and GSH conjugates such as leukotriene C4 (LTC4). Transports also various bile salts (taurocholate, glycocholate, taurochenodeoxycholate-3-sulfate, taurolithocholate- 3-sulfate). Does not contribute substantially to bile salt physiology but provides an alternative route for the export of bile acids and glucuronides from cholestatic hepatocytes. May contribute to regulate the transport of organic compounds in testes across the blood-testis-barrier. This Rattus norvegicus (Rat) protein is ATP-binding cassette sub-family C member 3 (Abcc3).